Here is an 837-residue protein sequence, read N- to C-terminus: Protein translocase subunit SecA 1 (837 aa).

Residues glutamine 85, 103–107 (GEGKT), and aspartate 492 each bind ATP. The segment covering 787–806 (QEVAKGEAVHPKEDGEEPKR) has biased composition (basic and acidic residues). Residues 787 to 811 (QEVAKGEAVHPKEDGEEPKRKPVRK) form a disordered region. Zn(2+) is bound by residues cysteine 821, cysteine 823, cysteine 832, and cysteine 833.

This sequence belongs to the SecA family. In terms of assembly, monomer and homodimer. Part of the essential Sec protein translocation apparatus which comprises SecA, SecYEG and auxiliary proteins SecDF. Other proteins may also be involved. Zn(2+) serves as cofactor.

The protein resides in the cell membrane. It localises to the cytoplasm. It catalyses the reaction ATP + H2O + cellular proteinSide 1 = ADP + phosphate + cellular proteinSide 2.. Functionally, part of the Sec protein translocase complex. Interacts with the SecYEG preprotein conducting channel. Has a central role in coupling the hydrolysis of ATP to the transfer of proteins into and across the cell membrane, serving as an ATP-driven molecular motor driving the stepwise translocation of polypeptide chains across the membrane. The protein is Protein translocase subunit SecA 1 of Geobacillus kaustophilus (strain HTA426).